The sequence spans 282 residues: Flagellin (282 aa).

It belongs to the bacterial flagellin family.

The protein localises to the secreted. The protein resides in the bacterial flagellum. Functionally, flagellin is the subunit protein which polymerizes to form the filaments of bacterial flagella. The flagellum is required to cause a persistent disease in a murine model of infection. This is Flagellin (fliC) from Brucella melitensis biotype 1 (strain ATCC 23456 / CCUG 17765 / NCTC 10094 / 16M).